Reading from the N-terminus, the 446-residue chain is MKLFGTDGVRGKAGEKLSAQTSMRLAMAAGIYFRKTSATNVILVGKDTRKSGYMIETAIVAGLTAVGYNVLQIGPMPTPAIAFLTENMRCDAGIMISASHNPYYDNGIKFFDSFGNKLDETIEAEIEKIFYDDELIANAQKTMTEIGANKRIDDVIGRYIVQIKNSFPKELNLKNLRVVLDVANGAAYKVAPTVFSELGADVIVINNEPNGSNINQNCGALHPEDLASEVKRLRADIGFAFDGDADRLVVVDENGEVVHGDAILGSLAAFLHEQKALKGGAIVATVMSNAALDDYLKAHKIKLLRSNVGDKYVLEMMKENGINFGGEQSGHVIFNDYAKTGDGLVTSMQVVAMMLKKGKKASEIFGELKPYPQILLNLKITEKKPLDKIEGLKELEASLAKEGIRSLFRYSGTENLIRLLLEGKNQTLVEKRMDEVEKFFVKALNA.

S99 functions as the Phosphoserine intermediate in the catalytic mechanism. Residues S99, D242, D244, and D246 each contribute to the Mg(2+) site. The residue at position 99 (S99) is a Phosphoserine.

This sequence belongs to the phosphohexose mutase family. It depends on Mg(2+) as a cofactor. Post-translationally, activated by phosphorylation.

The enzyme catalyses alpha-D-glucosamine 1-phosphate = D-glucosamine 6-phosphate. Catalyzes the conversion of glucosamine-6-phosphate to glucosamine-1-phosphate. The chain is Phosphoglucosamine mutase from Campylobacter concisus (strain 13826).